The primary structure comprises 208 residues: N-(5'-phosphoribosyl)anthranilate isomerase (208 aa).

Belongs to the TrpF family.

It catalyses the reaction N-(5-phospho-beta-D-ribosyl)anthranilate = 1-(2-carboxyphenylamino)-1-deoxy-D-ribulose 5-phosphate. It participates in amino-acid biosynthesis; L-tryptophan biosynthesis; L-tryptophan from chorismate: step 3/5. This chain is N-(5'-phosphoribosyl)anthranilate isomerase, found in Dechloromonas aromatica (strain RCB).